A 112-amino-acid polypeptide reads, in one-letter code: CRISPR-associated endoribonuclease Cas2 2 (112 aa).

Residue Asp15 participates in Mg(2+) binding.

Belongs to the CRISPR-associated endoribonuclease Cas2 protein family. As to quaternary structure, homodimer, forms a heterotetramer with a Cas1 homodimer. It depends on Mg(2+) as a cofactor.

Its function is as follows. CRISPR (clustered regularly interspaced short palindromic repeat), is an adaptive immune system that provides protection against mobile genetic elements (viruses, transposable elements and conjugative plasmids). CRISPR clusters contain sequences complementary to antecedent mobile elements and target invading nucleic acids. CRISPR clusters are transcribed and processed into CRISPR RNA (crRNA). Functions as a ssRNA-specific endoribonuclease. Involved in the integration of spacer DNA into the CRISPR cassette. The chain is CRISPR-associated endoribonuclease Cas2 2 from Rhodospirillum rubrum (strain ATCC 11170 / ATH 1.1.1 / DSM 467 / LMG 4362 / NCIMB 8255 / S1).